Here is a 445-residue protein sequence, read N- to C-terminus: Methionine aminopeptidase 2-2 (445 aa).

Positions 1–92 (MAAQASEDLK…RVPISQLFPN (92 aa)) are disordered. The span at 18–33 (AGDSKAAAATAGQAEA) shows a compositional bias: low complexity. Positions 34–46 (GEAEDDSDDDEVD) are enriched in acidic residues. The segment covering 47–58 (GNAAPEGAASGA) has biased composition (low complexity). Basic residues predominate over residues 59 to 74 (AKKKKKRKPKKKKKGG). Residue His198 coordinates substrate. Residues Asp218, Asp229, and His298 each coordinate a divalent metal cation. Position 306 (His306) interacts with substrate. Glu331 and Glu426 together coordinate a divalent metal cation.

This sequence belongs to the peptidase M24A family. Methionine aminopeptidase eukaryotic type 2 subfamily. The cofactor is Co(2+). It depends on Zn(2+) as a cofactor. Mn(2+) serves as cofactor. Fe(2+) is required as a cofactor.

The protein resides in the cytoplasm. The enzyme catalyses Release of N-terminal amino acids, preferentially methionine, from peptides and arylamides.. Cotranslationally removes the N-terminal methionine from nascent proteins. The N-terminal methionine is often cleaved when the second residue in the primary sequence is small and uncharged (Met-Ala-, Cys, Gly, Pro, Ser, Thr, or Val). The polypeptide is Methionine aminopeptidase 2-2 (Aspergillus terreus (strain NIH 2624 / FGSC A1156)).